Consider the following 365-residue polypeptide: Deoxyribonuclease-2-alpha (365 aa).

Residues 1–19 form the signal peptide; the sequence is MATLSSLLLTALLWVPVGT. The cysteines at positions 22 and 162 are disulfide-linked. Residues asparagine 215, asparagine 269, and asparagine 293 are each glycosylated (N-linked (GlcNAc...) asparagine). Intrachain disulfides connect cysteine 270–cysteine 348 and cysteine 311–cysteine 330. Residue histidine 298 is part of the active site.

Belongs to the DNase II family.

The protein resides in the lysosome. The enzyme catalyses Endonucleolytic cleavage to nucleoside 3'-phosphates and 3'-phosphooligonucleotide end-products.. Functionally, hydrolyzes DNA under acidic conditions with a preference for double-stranded DNA. Plays a major role in the clearance of nucleic acids generated through apoptosis, hence preventing autoinflammation. Necessary for proper fetal development and for definitive erythropoiesis in fetal liver and bone marrow, where it degrades nuclear DNA expelled from erythroid precursor cells. This chain is Deoxyribonuclease-2-alpha (DNASE2), found in Bos taurus (Bovine).